Reading from the N-terminus, the 117-residue chain is Multidrug resistance protein EbrB (117 aa).

Transmembrane regions (helical) follow at residues 3–23, 31–51, 59–79, and 81–101; these read GLLY…MLKL, WPIA…SFSL, AYAT…FLLF, and ETIS…VVVL.

It belongs to the drug/metabolite transporter (DMT) superfamily. Small multidrug resistance (SMR) (TC 2.A.7.1) family. EbrA/EbrB subfamily. The efflux pump is composed of EbrA and EbrB.

It is found in the cell membrane. Functionally, part of a multidrug efflux pump. Confers resistance to cationic lipophilic dyes such as ethidium bromide, acriflavine, pyronine Y and safranin O. The efflux is probably coupled to an influx of protons. The polypeptide is Multidrug resistance protein EbrB (ebrB) (Bacillus subtilis (strain 168)).